Consider the following 271-residue polypeptide: uncharacterized protein (271 aa).

Positions 1 to 20 (MPDLHTLPAGSRPERAIRNN) are disordered.

This sequence belongs to the PEP2 family.

This is an uncharacterized protein from Aspergillus terreus (strain NIH 2624 / FGSC A1156).